We begin with the raw amino-acid sequence, 326 residues long: Dehydrogenase/reductase SDR family protein 7-like (326 aa).

The Cytoplasmic segment spans residues 1–17 (MKVQDMDKCAPSSDWNV). Residues 18–38 (LYWVLGTVLMPVALPLAIINI) form a helical; Signal-anchor for type II membrane protein membrane-spanning segment. The Peroxisomal segment spans residues 39-326 (WQRFQAQKFR…KLENAEKKST (288 aa)). 57–81 (LITGASSGLGESLAHVFYRAGCRVI) contributes to the NAD(+) binding site. Residue Ser-193 coordinates substrate. The active-site Proton acceptor is the Tyr-206.

This sequence belongs to the short-chain dehydrogenases/reductases (SDR) family.

The protein localises to the peroxisome membrane. Its function is as follows. Putative oxidoreductase. This chain is Dehydrogenase/reductase SDR family protein 7-like, found in Drosophila melanogaster (Fruit fly).